The chain runs to 403 residues: MSKFNRIHLVVLDSVGIGAAPDANNFVNAGVPDGASDTLGHISKTVGLNVPNMAKIGLGNIPRETPLKTVAAESNPTGYATKLEEVSLGKDTMTGHWEIMGLNITEPFDTFWNGFPEEILTKIEEFSGRKVIREANKPYSGTAVIYDFGPRQMETGELIIYTSADPVLQIAAHEDIIPLDELYRICEYARSITLERPALLGRIIARPYVGEPGNFTRTANRRDLAVSPFFPTVLDKLNEAGIDTYAVGKINDIFNGAGINHDMGHNKSNSHGIDTLLKTMGLAEFEKGFSFTNLVDFDALYGHRRNAHGYRDCLHEFDERLPEIIAAMRENDLLLITADHGNDPTYAGTDHTREYIPLLAYSPAFKGNGLIPVGHFADISATVADNFGVETAMIGESFLDKLV.

Mn(2+)-binding residues include aspartate 13, aspartate 298, histidine 303, aspartate 339, histidine 340, and histidine 351.

This sequence belongs to the phosphopentomutase family. Requires Mn(2+) as cofactor.

It localises to the cytoplasm. The enzyme catalyses 2-deoxy-alpha-D-ribose 1-phosphate = 2-deoxy-D-ribose 5-phosphate. It carries out the reaction alpha-D-ribose 1-phosphate = D-ribose 5-phosphate. It functions in the pathway carbohydrate degradation; 2-deoxy-D-ribose 1-phosphate degradation; D-glyceraldehyde 3-phosphate and acetaldehyde from 2-deoxy-alpha-D-ribose 1-phosphate: step 1/2. In terms of biological role, isomerase that catalyzes the conversion of deoxy-ribose 1-phosphate (dRib-1-P) and ribose 1-phosphate (Rib-1-P) to deoxy-ribose 5-phosphate (dRib-5-P) and ribose 5-phosphate (Rib-5-P), respectively. This is Phosphopentomutase from Streptococcus pneumoniae serotype 4 (strain ATCC BAA-334 / TIGR4).